The following is a 65-amino-acid chain: Large ribosomal subunit protein bL31 (65 aa).

Zn(2+) contacts are provided by Cys16, Cys18, Cys36, and Cys39.

This sequence belongs to the bacterial ribosomal protein bL31 family. Type A subfamily. In terms of assembly, part of the 50S ribosomal subunit. Zn(2+) is required as a cofactor.

Functionally, binds the 23S rRNA. The protein is Large ribosomal subunit protein bL31 of Brevibacillus brevis (strain 47 / JCM 6285 / NBRC 100599).